The primary structure comprises 109 residues: Large ribosomal subunit protein uL22 (109 aa).

It belongs to the universal ribosomal protein uL22 family. Part of the 50S ribosomal subunit.

In terms of biological role, this protein binds specifically to 23S rRNA; its binding is stimulated by other ribosomal proteins, e.g. L4, L17, and L20. It is important during the early stages of 50S assembly. It makes multiple contacts with different domains of the 23S rRNA in the assembled 50S subunit and ribosome. Its function is as follows. The globular domain of the protein is located near the polypeptide exit tunnel on the outside of the subunit, while an extended beta-hairpin is found that lines the wall of the exit tunnel in the center of the 70S ribosome. This chain is Large ribosomal subunit protein uL22, found in Cupriavidus necator (strain ATCC 17699 / DSM 428 / KCTC 22496 / NCIMB 10442 / H16 / Stanier 337) (Ralstonia eutropha).